The primary structure comprises 120 residues: C-C motif chemokine 16 (120 aa).

Positions 1–23 (MKVSEAALSLLVLILIITSASRS) are cleaved as a signal peptide. Cystine bridges form between C37-C60 and C38-C76.

This sequence belongs to the intercrine beta (chemokine CC) family. As to expression, mainly expressed in liver, also found in spleen and thymus. Highly expressed in LPS- and IFN-gamma-activated monocytes, weakly in some lymphocytes, including natural killer cells, gamma-delta T-cells, and some T-cell clones.

The protein localises to the secreted. Its function is as follows. Shows chemotactic activity for lymphocytes and monocytes but not neutrophils. Also shows potent myelosuppressive activity, suppresses proliferation of myeloid progenitor cells. Recombinant SCYA16 shows chemotactic activity for monocytes and THP-1 monocytes, but not for resting lymphocytes and neutrophils. Induces a calcium flux in THP-1 cells that were desensitized by prior expression to RANTES. This Homo sapiens (Human) protein is C-C motif chemokine 16 (CCL16).